The primary structure comprises 724 residues: Palmitoyltransferase AKR1 (724 aa).

Topologically, residues 1 to 308 (MSGQLNVAED…HAKMVTFFTP (308 aa)) are cytoplasmic. ANK repeat units follow at residues 54–84 (PTLV…DVKA), 90–119 (EQVS…DVNI), 124–153 (LEAT…DPLI), 157–187 (QGYN…PVDS), 191–220 (TGKT…DVRV), and 224–253 (GGFT…DVFL). A helical membrane pass occupies residues 309–329 (WLILGLILSFFAYFSILLAIL). Residues 330–331 (GC) lie on the Lumenal side of the membrane. The helical transmembrane segment at 332-352 (LLTVLAAGYGLYNFVFPSFIL) threads the bilayer. At 353 to 360 (MKRIVIFK) the chain is on the cytoplasmic side. Residues 361–381 (TPLLAGILSGTIFWLLYVWLF) traverse the membrane as a helical segment. At 382–392 (KMLPATFDDEP) the chain is on the lumenal side. A helical membrane pass occupies residues 393–413 (ILNLTVFALFAGVVFLLTKLL). Residues 414–489 (QSDPGYIVPA…YNYIGFRNHK (76 aa)) lie on the Cytoplasmic side of the membrane. A DHHC domain is found at 446-496 (HFCIHSWIRLPLRAKYKRFVHSVILRYDHYCPWIYNYIGFRNHKIFIYFIL). Residue cysteine 476 is the S-palmitoyl cysteine intermediate of the active site. A helical membrane pass occupies residues 490-510 (IFIYFILLLDLGILALAKLCL). Over 511-543 (EYFDELKDHAKNKDALKCSILSKDLCAGFTYDP) the chain is Lumenal. Residues 544 to 564 (FTLFLLEWVCVQGMWILALSF) traverse the membrane as a helical segment. At 565–724 (VQFFECLKGV…ERVISIEEIV (160 aa)) the chain is on the cytoplasmic side.

Belongs to the DHHC palmitoyltransferase family. AKR/ZDHHC17 subfamily.

The protein resides in the early endosome membrane. Its subcellular location is the golgi apparatus membrane. The enzyme catalyses L-cysteinyl-[protein] + hexadecanoyl-CoA = S-hexadecanoyl-L-cysteinyl-[protein] + CoA. In terms of biological role, palmitoyltransferase specific for casein kinase 1. The sequence is that of Palmitoyltransferase AKR1 (AKR1) from Eremothecium gossypii (strain ATCC 10895 / CBS 109.51 / FGSC 9923 / NRRL Y-1056) (Yeast).